A 157-amino-acid chain; its full sequence is uncharacterized protein (157 aa).

This is an uncharacterized protein from Lepidoptera (butterflies and moths).